We begin with the raw amino-acid sequence, 367 residues long: Peptide chain release factor 1 (367 aa).

At Gln-243 the chain carries N5-methylglutamine.

Belongs to the prokaryotic/mitochondrial release factor family. In terms of processing, methylated by PrmC. Methylation increases the termination efficiency of RF1.

It localises to the cytoplasm. Its function is as follows. Peptide chain release factor 1 directs the termination of translation in response to the peptide chain termination codons UAG and UAA. The polypeptide is Peptide chain release factor 1 (Acidovorax sp. (strain JS42)).